The sequence spans 162 residues: UPF0305 protein MmarC6_0221 (162 aa).

This sequence belongs to the UPF0305 family.

This is UPF0305 protein MmarC6_0221 from Methanococcus maripaludis (strain C6 / ATCC BAA-1332).